We begin with the raw amino-acid sequence, 232 residues long: LRRN4 C-terminal-like protein (232 aa).

A signal peptide spans 1–22 (MPHSPCLLWLLAVTSLVPGTQP). The Extracellular segment spans residues 23 to 189 (LVAGDLEGDE…RLTVPPRPLT (167 aa)). One can recognise a Fibronectin type-III domain in the interval 77-172 (PPHPPRLGEV…GAEGLDSADG (96 aa)). Asparagine 127 carries an N-linked (GlcNAc...) asparagine glycan. Residues 190–210 (LLHAAMGVGSALALLSCSALV) traverse the membrane as a helical segment. Residues 211 to 232 (WHFCLRQRWGCPRRGRPSHAGL) lie on the Cytoplasmic side of the membrane.

The protein localises to the membrane. In Bos taurus (Bovine), this protein is LRRN4 C-terminal-like protein (LRRN4CL).